The primary structure comprises 314 residues: Protein translocase subunit SecF (314 aa).

6 helical membrane passes run 17-37 (AVAV…TRGL), 137-157 (QGTY…WWRY), 158-178 (ELNF…ITLG), 188-210 (SLPV…IVVF), 250-270 (TLIV…GFAF), and 272-292 (LLVG…LLLV).

It belongs to the SecD/SecF family. SecF subfamily. As to quaternary structure, forms a complex with SecD. Part of the essential Sec protein translocation apparatus which comprises SecA, SecYEG and auxiliary proteins SecDF. Other proteins may also be involved.

It is found in the cell inner membrane. Its function is as follows. Part of the Sec protein translocase complex. Interacts with the SecYEG preprotein conducting channel. SecDF uses the proton motive force (PMF) to complete protein translocation after the ATP-dependent function of SecA. The chain is Protein translocase subunit SecF from Desulfurispirillum indicum (strain ATCC BAA-1389 / DSM 22839 / S5).